We begin with the raw amino-acid sequence, 424 residues long: Histidine--tRNA ligase (424 aa).

This sequence belongs to the class-II aminoacyl-tRNA synthetase family. Homodimer.

The protein resides in the cytoplasm. The enzyme catalyses tRNA(His) + L-histidine + ATP = L-histidyl-tRNA(His) + AMP + diphosphate + H(+). The protein is Histidine--tRNA ligase of Pectobacterium carotovorum subsp. carotovorum (strain PC1).